The sequence spans 165 residues: Putative 1,2-phenylacetyl-CoA epoxidase, subunit D (165 aa).

In terms of assembly, monomer.

It participates in aromatic compound metabolism; phenylacetate degradation. In terms of biological role, possible component of 1,2-phenylacetyl-CoA epoxidase multicomponent enzyme system which catalyzes the reduction of phenylacetyl-CoA (PA-CoA) to form 1,2-epoxyphenylacetyl-CoA. The subunit D may have a function related to the maturation of the monooxygenase complex, rather than direct involvement in catalysis. PaaD could assist either in maturation of PaaE or PaaA. In Escherichia coli (strain K12), this protein is Putative 1,2-phenylacetyl-CoA epoxidase, subunit D (paaD).